A 63-amino-acid chain; its full sequence is Large ribosomal subunit protein bL28 (63 aa).

The tract at residues Met1–Ala21 is disordered.

The protein belongs to the bacterial ribosomal protein bL28 family.

This Mycoplasmopsis pulmonis (strain UAB CTIP) (Mycoplasma pulmonis) protein is Large ribosomal subunit protein bL28.